A 793-amino-acid chain; its full sequence is Short transient receptor potential channel 1 (793 aa).

Positions Met-1–Glu-30 are disordered. Topologically, residues Met-1–Lys-345 are cytoplasmic. The span at Ser-15–Pro-28 shows a compositional bias: low complexity. 4 ANK repeats span residues Leu-46–Leu-75, Leu-83–Gln-109, Ala-111–Thr-156, and Met-158–Lys-180. Zn(2+) is bound by residues His-189, Cys-193, Cys-195, and Cys-198. The discontinuously helical intramembrane region spans Pro-346 to Ile-379. The Cytoplasmic segment spans residues Ile-380–Lys-386. The helical transmembrane segment at Phe-387–Tyr-404 threads the bilayer. The Extracellular segment spans residues Ser-405–Arg-422. The helical transmembrane segment at Ile-423–Ile-439 threads the bilayer. Residues Lys-440–Arg-455 lie on the Cytoplasmic side of the membrane. The chain crosses the membrane as a helical span at residues Asn-456 to Val-475. At Ala-476–Leu-496 the chain is on the extracellular side. A helical transmembrane segment spans residues Val-497–Tyr-517. At Thr-518 to Asp-536 the chain is on the cytoplasmic side. A helical membrane pass occupies residues Phe-537 to Leu-558. Topologically, residues Tyr-559 to Ala-623 are extracellular. Cys-571 and Cys-576 are disulfide-bonded. Residues Val-624–Met-644 form a helical membrane-spanning segment. Residues Leu-645–Asn-793 lie on the Cytoplasmic side of the membrane.

It belongs to the transient receptor (TC 1.A.4) family. STrpC subfamily. TRPC1 sub-subfamily. As to quaternary structure, heterotetramer with TRPC4 and/or TRPC5. Forms a heteromeric ion channel with TRPC4, with a 1:3 TRPC1:TRPC4 stoichiometry. Unlike other TRP channel proteins, does not form a homomeric channel. Interacts with TRPC4AP. Interacts with ITPR3. Interacts with MX1 and RNF24. Interacts with FKBP4. Interacts with PLSCR1. Interacts with PKD2L2. Forms a heterotetramer with PKD2 with a 2:2 stoichiometry; has distinct channel properties separate from PKD2 or TRPC1 homomers alone. Interacts with isoform 2 of TRPC3. In terms of processing, activation of PRKCA induces phosphorylation of TRPC1 and subsequent Ca2+ entry into cells. In terms of tissue distribution, seems to be ubiquitous.

It localises to the cell membrane. It carries out the reaction Ca(2+)(in) = Ca(2+)(out). It catalyses the reaction Na(+)(in) = Na(+)(out). The catalysed reaction is Li(+)(in) = Li(+)(out). The enzyme catalyses Cs(+)(in) = Cs(+)(out). Its activity is regulated as follows. May be operated by a phosphatidylinositol second messenger system activated by receptor tyrosine kinases or G-protein coupled receptors. Also activated by intracellular calcium store depletion. Inhibited by xanthine-based inhibitor Pico145. In terms of biological role, forms a receptor-activated non-selective calcium permeant cation channel. Forms a heteromeric ion channel with TRPC4 or TRPC5 that has reduced calcium permeability compared to the homomeric TRPC4 or TRPC5 channel. Also permeable to monovalent ions including sodium, lithium and cesium ions. Forms a receptor-activated non-selective calcium permeant cation channel. Also activated by intracellular calcium store depletion. The protein is Short transient receptor potential channel 1 (TRPC1) of Homo sapiens (Human).